We begin with the raw amino-acid sequence, 337 residues long: Ketol-acid reductoisomerase (NADP(+)) (337 aa).

In terms of domain architecture, KARI N-terminal Rossmann spans 3–183; sequence IELLYDADAD…GGARAGVIPT (181 aa). Residues 26-29, Arg49, Ser52, Ser54, and 84-87 contribute to the NADP(+) site; these read YGSQ and DTSQ. The active site involves His109. Position 135 (Gly135) interacts with NADP(+). Residues 184-329 enclose the KARI C-terminal knotted domain; sequence TFREETETDL…SKLRDLMSWV (146 aa). The Mg(2+) site is built by Asp192, Glu196, Glu228, and Glu232. Substrate is bound at residue Ser253.

This sequence belongs to the ketol-acid reductoisomerase family. The cofactor is Mg(2+).

It carries out the reaction (2R)-2,3-dihydroxy-3-methylbutanoate + NADP(+) = (2S)-2-acetolactate + NADPH + H(+). It catalyses the reaction (2R,3R)-2,3-dihydroxy-3-methylpentanoate + NADP(+) = (S)-2-ethyl-2-hydroxy-3-oxobutanoate + NADPH + H(+). The protein operates within amino-acid biosynthesis; L-isoleucine biosynthesis; L-isoleucine from 2-oxobutanoate: step 2/4. Its pathway is amino-acid biosynthesis; L-valine biosynthesis; L-valine from pyruvate: step 2/4. In terms of biological role, involved in the biosynthesis of branched-chain amino acids (BCAA). Catalyzes an alkyl-migration followed by a ketol-acid reduction of (S)-2-acetolactate (S2AL) to yield (R)-2,3-dihydroxy-isovalerate. In the isomerase reaction, S2AL is rearranged via a Mg-dependent methyl migration to produce 3-hydroxy-3-methyl-2-ketobutyrate (HMKB). In the reductase reaction, this 2-ketoacid undergoes a metal-dependent reduction by NADPH to yield (R)-2,3-dihydroxy-isovalerate. This chain is Ketol-acid reductoisomerase (NADP(+)), found in Corynebacterium diphtheriae (strain ATCC 700971 / NCTC 13129 / Biotype gravis).